The following is a 502-amino-acid chain: Probable cytochrome P450 28d1 (502 aa).

Cys446 is a heme binding site.

The protein belongs to the cytochrome P450 family. Heme is required as a cofactor.

It is found in the endoplasmic reticulum membrane. The protein localises to the microsome membrane. Its function is as follows. May be involved in the metabolism of insect hormones and in the breakdown of synthetic insecticides. This Drosophila melanogaster (Fruit fly) protein is Probable cytochrome P450 28d1 (Cyp28d1).